The primary structure comprises 375 residues: uncharacterized protein (375 aa).

The next 7 membrane-spanning stretches (helical) occupy residues 21–41, 66–86, 160–180, 203–223, 234–254, 289–309, and 338–358; these read LLLL…IVLF, IIVF…FCVS, LVGV…PGIV, LVGL…HLLI, FYMV…FHLF, VISF…YFLI, and FFLM…MLFF.

The protein resides in the cell membrane. This is an uncharacterized protein from Mycoplasma genitalium (strain ATCC 33530 / DSM 19775 / NCTC 10195 / G37) (Mycoplasmoides genitalium).